The sequence spans 232 residues: 2,3-bisphosphoglycerate-dependent phosphoglycerate mutase (232 aa).

Substrate contacts are provided by residues 10 to 17, 23 to 24, arginine 62, 89 to 92, lysine 100, 116 to 117, and 185 to 186; these read RHGESQWN, TG, ERHY, RR, and GN. Histidine 11 (tele-phosphohistidine intermediate) is an active-site residue. Glutamate 89 functions as the Proton donor/acceptor in the catalytic mechanism.

This sequence belongs to the phosphoglycerate mutase family. BPG-dependent PGAM subfamily. Homodimer.

The enzyme catalyses (2R)-2-phosphoglycerate = (2R)-3-phosphoglycerate. The protein operates within carbohydrate degradation; glycolysis; pyruvate from D-glyceraldehyde 3-phosphate: step 3/5. In terms of biological role, catalyzes the interconversion of 2-phosphoglycerate and 3-phosphoglycerate. This is 2,3-bisphosphoglycerate-dependent phosphoglycerate mutase from Blochmanniella floridana.